The following is a 347-amino-acid chain: LRP2-binding protein (347 aa).

One copy of the TPR repeat lies at 59 to 92 (TLAYFLRGQLYFEEGWYEEALEQFEEIKEKDHQA). 6 Sel1-like repeats span residues 93–125 (TYQL…DSPC), 133–168 (FAAA…DNGN), 173–206 (VKAQ…GNGN), 207–242 (LESQ…ERGN), 243–277 (VYAQ…EVHD), and 297–332 (AMAS…RLNP).

Interacts with LRP2.

Its subcellular location is the cytoplasm. Functionally, may act as an adapter that regulates LRP2 function. The sequence is that of LRP2-binding protein (LRP2BP) from Homo sapiens (Human).